A 96-amino-acid polypeptide reads, in one-letter code: Protein S100-A10 (96 aa).

Residues 62–73 (DDCRKGQVNFRS) form an ancestral calcium site region.

Belongs to the S-100 family. Tetramer of 2 light chains (p10) and 2 heavy chains (annexin II).

In terms of biological role, because p10 induces the dimerization of annexin II (p36), it may function as a regulator of protein phosphorylation in that the p36 monomer is the preferred target (in vitro) of tyrosine-specific kinase. The sequence is that of Protein S100-A10 (s100a10) from Xenopus laevis (African clawed frog).